The sequence spans 272 residues: Undecaprenyl-diphosphatase (272 aa).

A run of 8 helical transmembrane segments spans residues 4 to 24, 45 to 65, 89 to 109, 115 to 135, 152 to 174, 189 to 209, 225 to 245, and 251 to 271; these read IHSL…EFLP, AETF…VMFW, LTLG…LVFH, LFNP…LIAA, TYRQ…FSRS, YAAS…ATAL, MFAV…KTFL, and ISFI…YVVF.

This sequence belongs to the UppP family.

The protein resides in the cell inner membrane. The enzyme catalyses di-trans,octa-cis-undecaprenyl diphosphate + H2O = di-trans,octa-cis-undecaprenyl phosphate + phosphate + H(+). Functionally, catalyzes the dephosphorylation of undecaprenyl diphosphate (UPP). Confers resistance to bacitracin. The polypeptide is Undecaprenyl-diphosphatase (Citrobacter koseri (strain ATCC BAA-895 / CDC 4225-83 / SGSC4696)).